The chain runs to 412 residues: Serine hydroxymethyltransferase (412 aa).

(6S)-5,6,7,8-tetrahydrofolate-binding positions include Leu-119 and Gly-123 to Leu-125. Lys-228 bears the N6-(pyridoxal phosphate)lysine mark.

It belongs to the SHMT family. Homodimer. Pyridoxal 5'-phosphate is required as a cofactor.

It localises to the cytoplasm. It catalyses the reaction (6R)-5,10-methylene-5,6,7,8-tetrahydrofolate + glycine + H2O = (6S)-5,6,7,8-tetrahydrofolate + L-serine. Its pathway is one-carbon metabolism; tetrahydrofolate interconversion. The protein operates within amino-acid biosynthesis; glycine biosynthesis; glycine from L-serine: step 1/1. Catalyzes the reversible interconversion of serine and glycine with tetrahydrofolate (THF) serving as the one-carbon carrier. This reaction serves as the major source of one-carbon groups required for the biosynthesis of purines, thymidylate, methionine, and other important biomolecules. Also exhibits THF-independent aldolase activity toward beta-hydroxyamino acids, producing glycine and aldehydes, via a retro-aldol mechanism. The chain is Serine hydroxymethyltransferase from Thermodesulfovibrio yellowstonii (strain ATCC 51303 / DSM 11347 / YP87).